Reading from the N-terminus, the 477-residue chain is UDP-N-acetylmuramate--L-alanine ligase (477 aa).

115-121 (GTHGKTT) provides a ligand contact to ATP.

It belongs to the MurCDEF family.

It is found in the cytoplasm. It catalyses the reaction UDP-N-acetyl-alpha-D-muramate + L-alanine + ATP = UDP-N-acetyl-alpha-D-muramoyl-L-alanine + ADP + phosphate + H(+). The protein operates within cell wall biogenesis; peptidoglycan biosynthesis. In terms of biological role, cell wall formation. This Gluconobacter oxydans (strain 621H) (Gluconobacter suboxydans) protein is UDP-N-acetylmuramate--L-alanine ligase.